The primary structure comprises 201 residues: Probable chemoreceptor glutamine deamidase CheD (201 aa).

Belongs to the CheD family.

It carries out the reaction L-glutaminyl-[protein] + H2O = L-glutamyl-[protein] + NH4(+). Probably deamidates glutamine residues to glutamate on methyl-accepting chemotaxis receptors (MCPs), playing an important role in chemotaxis. The protein is Probable chemoreceptor glutamine deamidase CheD of Chlorobium luteolum (strain DSM 273 / BCRC 81028 / 2530) (Pelodictyon luteolum).